A 66-amino-acid polypeptide reads, in one-letter code: Neurotoxin BmK AGP-SYPU1 (66 aa).

Residues 2–64 enclose the LCN-type CS-alpha/beta domain; sequence RDAYIAQNYN…KPIRIPGKCH (63 aa). Disulfide bonds link Cys-12/Cys-63, Cys-16/Cys-36, Cys-22/Cys-46, and Cys-26/Cys-48. The propeptide at 65 to 66 is removed by a carboxypeptidase; it reads RR.

As to expression, expressed by the venom gland.

It localises to the secreted. In terms of biological role, alpha toxins bind voltage-independently at site-3 of sodium channels (Nav) and inhibit the inactivation of the activated channels, thereby blocking neuronal transmission. This toxin has a strong analgesic effect when administered to mice by intraperitoneal injection. This Olivierus martensii (Manchurian scorpion) protein is Neurotoxin BmK AGP-SYPU1.